Here is a 25-residue protein sequence, read N- to C-terminus: Bombinin-like peptide 4 (25 aa).

Phenylalanine amide is present on F25.

Belongs to the bombinin family. Expressed by the skin glands.

It localises to the secreted. Functionally, has antimicrobial activity, but no hemolytic activity. Preference on killing Gram-negative non-enteric bacteria. This Bombina orientalis (Oriental fire-bellied toad) protein is Bombinin-like peptide 4.